Consider the following 254-residue polypeptide: Capsid protein (254 aa).

The segment covering 1-12 has biased composition (polar residues); that stretch reads MRKYTRNTYTMS. The tract at residues 1–38 is disordered; that stretch reads MRKYTRNTYTMSQKRKVNPQSAWPKKRRTSTTSRKYQW. The short motif at 10 to 35 is the Bipartite nuclear localization signal element; it reads TMSQKRKVNPQSAWPKKRRTSTTSRK.

This sequence belongs to the geminiviridae capsid protein family. In terms of assembly, homomultimer. Binds to single-stranded and double-stranded viral DNA. Interacts (via nuclear localization signal) with host importin alpha-1a.

The protein localises to the virion. It is found in the host nucleus. Functionally, encapsidates the viral genome into characteristic twinned ('geminate') particles. Binds the genomic viral ssDNA and shuttles it into and out of the cell nucleus. Plays a role in protection of the genome from degradation, virus acquisition and transmission by insect vectors, infectivity, and systemic movement. The CP of monopartite geminiviruses is absolutely essential for virus movement. The chain is Capsid protein from Beet curly top virus (strain California/Logan) (BCTV).